The chain runs to 41 residues: Pi-stichotoxin-Hcr5a (41 aa).

3 disulfide bridges follow: Cys-4–Cys-37, Cys-6–Cys-30, and Cys-20–Cys-38.

The protein belongs to the sea anemone type 3 (BDS) potassium channel toxin family.

It is found in the secreted. The protein resides in the nematocyst. In terms of biological role, weakly inhibits human homomeric ASIC3 (IC(50)=5.5 uM). The sequence is that of Pi-stichotoxin-Hcr5a from Radianthus crispa (Leathery sea anemone).